A 1026-amino-acid chain; its full sequence is Unconventional myosin-Ic (1026 aa).

The residue at position 1 (Met-1) is an N-acetylmethionine. Positions 12 to 695 (GVQDFLLLEN…TLFITEDALE (684 aa)) constitute a Myosin motor domain. Residues Asn-53, Tyr-61, 104–113 (SGESGAGKTE), and 157–161 (NDNSS) each bind ATP. Lys-349 carries the N6-methyllysine modification. The tract at residues 572–594 (LAKLMDILMSKEPSYVRCIKPND) is actin-binding. IQ domains lie at 698–727 (KQTIAVTLQKSWRGYRERANYHRIRHAVIV) and 721–750 (IRHAVIVIQSWWRGVKGRRKAKHRRQAADT). The 176-residue stretch at 849–1024 (KDGYSRSVPK…NGHLSVTTPR (176 aa)) folds into the TH1 domain.

This sequence belongs to the TRAFAC class myosin-kinesin ATPase superfamily. Myosin family. Interacts (via its IQ motifs) with calm.

It is found in the cytoplasm. Its subcellular location is the cell cortex. It localises to the cell projection. The protein resides in the ruffle membrane. The protein localises to the cytoplasmic vesicle. It is found in the stereocilium membrane. Functionally, myosins are actin-based motor molecules with ATPase activity. Unconventional myosins serve in intracellular movements. Their highly divergent tails are presumed to bind to membranous compartments, which would be moved relative to actin filaments. The chain is Unconventional myosin-Ic (myo1c) from Danio rerio (Zebrafish).